The sequence spans 226 residues: ATP-dependent dethiobiotin synthetase BioD (226 aa).

Position 12 to 17 (12 to 17 (GVGKTV)) interacts with ATP. Residue Thr-16 coordinates Mg(2+). Residue Lys-37 is part of the active site. Thr-41 serves as a coordination point for substrate. ATP-binding positions include Asp-49, 108 to 111 (EGAG), and 197 to 199 (PAG). Residues Asp-49 and Glu-108 each coordinate Mg(2+).

This sequence belongs to the dethiobiotin synthetase family. In terms of assembly, homodimer. It depends on Mg(2+) as a cofactor.

It is found in the cytoplasm. It catalyses the reaction (7R,8S)-7,8-diammoniononanoate + CO2 + ATP = (4R,5S)-dethiobiotin + ADP + phosphate + 3 H(+). It functions in the pathway cofactor biosynthesis; biotin biosynthesis; biotin from 7,8-diaminononanoate: step 1/2. Its function is as follows. Catalyzes a mechanistically unusual reaction, the ATP-dependent insertion of CO2 between the N7 and N8 nitrogen atoms of 7,8-diaminopelargonic acid (DAPA, also called 7,8-diammoniononanoate) to form a ureido ring. This is ATP-dependent dethiobiotin synthetase BioD from Mycobacterium avium (strain 104).